The following is a 139-amino-acid chain: Short neuropeptide F (139 aa).

The propeptide occupies 1 to 23; that stretch reads MGRARRTVRAPAQHDALGGHALA. Positions 1-48 are disordered; the sequence is MGRARRTVRAPAQHDALGGHALARKSVRSPSRRLRFGRRSDPDMPPQA. Over residues 22 to 37 the composition is skewed to basic residues; sequence LARKSVRSPSRRLRFG. Residue phenylalanine 36 is modified to Phenylalanine amide. Positions 40–62 are excised as a propeptide; that stretch reads SDPDMPPQAPLDEMNELLSLREV. Phenylalanine 70 carries the post-translational modification Phenylalanine amide. Positions 74–96 are excised as a propeptide; the sequence is SEERAVPHIFPQEFLTQEQDRAV. Phenylalanine 105 is subject to Phenylalanine amide. Residues 109 to 139 constitute a propeptide that is removed on maturation; sequence SDNNMFLLPYESALPQEVKANGSVEDDRQQE.

This sequence belongs to the NPY family. In terms of tissue distribution, sNPF peptide 1: Expressed in corpora cardiaca (CC), corpora allata (CA), antennal lobe (AL) and gnathal ganglion (GNG) (at protein level). Expression in AL detected in all animals, in GNG in most animals, expression in CC and CA in some animals (at protein level). sNPF peptide 2: Expressed in corpora cardiaca (CC), corpora allata (CA), antennal lobe (AL) and gnathal ganglion (GNG) (at protein level). Expression in AL detected in all animals, in GNG, CC and CA in most animals (at protein level). sNPF peptide 3: Expressed in corpora cardiaca (CC), corpora allata (CA), antennal lobe (AL) and gnathal ganglion (GNG) (at protein level). Expression detected in all animals (at protein level).

The protein resides in the secreted. Its function is as follows. Plays a role in controlling food intake and regulating body size. This is Short neuropeptide F from Agrotis ipsilon (Black cutworm moth).